The chain runs to 705 residues: Zinc finger protein 770 (705 aa).

A Glycyl lysine isopeptide (Lys-Gly) (interchain with G-Cter in SUMO2) cross-link involves residue Lys16. C2H2-type zinc fingers lie at residues 31–53 (YICN…YLIH), 59–81 (FECD…QLTH), and 85–107 (FSCN…QQLH). Glycyl lysine isopeptide (Lys-Gly) (interchain with G-Cter in SUMO2) cross-links involve residues Lys116, Lys124, and Lys149. 3 C2H2-type zinc fingers span residues 164-186 (HACT…SLIH), 192-214 (FKCV…QLTH), and 220-242 (FQCC…KQIH). Lys266 participates in a covalent cross-link: Glycyl lysine isopeptide (Lys-Gly) (interchain with G-Cter in SUMO2). Residues 298–322 (FQCSECEECFESEQILNGHKCLPAR) form a C2H2-type 7; degenerate zinc finger. C2H2-type zinc fingers lie at residues 485–507 (CPCD…YLIH), 513–535 (FDCN…KLTH), 640–662 (YQCS…YLIH), and 668–690 (FECS…QLTH). Residue Lys698 forms a Glycyl lysine isopeptide (Lys-Gly) (interchain with G-Cter in SUMO2) linkage.

This sequence belongs to the krueppel C2H2-type zinc-finger protein family.

Its subcellular location is the nucleus. Its function is as follows. May be involved in transcriptional regulation. The protein is Zinc finger protein 770 (Znf770) of Mus musculus (Mouse).